The chain runs to 380 residues: Histidinol-phosphate aminotransferase (380 aa).

Lys-235 carries the post-translational modification N6-(pyridoxal phosphate)lysine.

The protein belongs to the class-II pyridoxal-phosphate-dependent aminotransferase family. Histidinol-phosphate aminotransferase subfamily. As to quaternary structure, homodimer. Pyridoxal 5'-phosphate is required as a cofactor.

The enzyme catalyses L-histidinol phosphate + 2-oxoglutarate = 3-(imidazol-4-yl)-2-oxopropyl phosphate + L-glutamate. It participates in amino-acid biosynthesis; L-histidine biosynthesis; L-histidine from 5-phospho-alpha-D-ribose 1-diphosphate: step 7/9. The protein is Histidinol-phosphate aminotransferase of Rhodococcus opacus (strain B4).